The primary structure comprises 200 residues: Large ribosomal subunit protein uL18 (200 aa).

Belongs to the universal ribosomal protein uL18 family. In terms of assembly, part of the 50S ribosomal subunit. Contacts the 5S and 23S rRNAs.

This is one of the proteins that bind and probably mediate the attachment of the 5S RNA into the large ribosomal subunit, where it forms part of the central protuberance. This is Large ribosomal subunit protein uL18 from Thermococcus sibiricus (strain DSM 12597 / MM 739).